Here is a 299-residue protein sequence, read N- to C-terminus: Putative cuticle collagen 155 (299 aa).

Positions M1–S27 are cleaved as a signal peptide. Triple-helical region stretches follow at residues G103–P132, G151–D177, G181–G202, and G216–K278. Residues P107–K278 form a disordered region. The span at P129 to P161 shows a compositional bias: pro residues. Residues G163–G172 are compositionally biased toward gly residues. Residues S173 to A197 are compositionally biased toward low complexity. The span at P215–P233 shows a compositional bias: pro residues. The span at P250–Q268 shows a compositional bias: low complexity.

This sequence belongs to the cuticular collagen family. In terms of assembly, collagen polypeptide chains are complexed within the cuticle by disulfide bonds and other types of covalent cross-links.

Functionally, nematode cuticles are composed largely of collagen-like proteins. The cuticle functions both as an exoskeleton and as a barrier to protect the worm from its environment. In Caenorhabditis elegans, this protein is Putative cuticle collagen 155 (col-155).